Consider the following 1001-residue polypeptide: MSPNRWILLLIFYISYLMFGAAIYYHIEHGEEKISRAEQRKAQIAINEYLLEELGDKNTTTQDEILQRISDYCDKPVTLPPTYDDTPYTWTFYHAFFFAFTVCSTVGYGNISPTTFAGRMIMIAYSVIGIPVNGILFAGLGEYFGRTFEAIYRRYKKYKMSTDMHYVPPQLGLITTVVIALIPGIALFLLLPSWVFTYFENWPYSISLYYSYVTTTTIGFGDYVPTFGANQPKEFGGWFVVYQIFVIVWFIFSLGYLVMIMTFITRGLQSKKLAYLEQQLSSNLKATQNRIWSGVTKDVGYLRRMLNELYILKVKPVYTDVDIAYTLPRSNSCPDLSMYRVEPAPIPSRKRAFSVCADMVAAQREAGMVHANSDTELSKLDREKTFETAEAYRQTTDLLAKVVNALATVKPPPAEQEDAALYGGYHGFSDSQILASEWSFSTVNEFTSPRRPRARACSDFNLEAPRWQSERPLRSSHNEWTWSGDNQQIQEAFNQRYKGQQRANGAANSTMVHLEPDALEEQLKKQSPGAGRVKKFSMPDGLRRLFPFQKKRPSQDLERKLSVVSVPEGVISQQARSPLDYYSNTVTAASSQSYLRNGRGPPPPFESNGSLASGGGGLTNMGFQMEDGATPPSALGGGAYQRKAAAGKRRRESIYTQNQAPSARRGSMYPPTAHALAQMQMRRGSLATSGSGSAAMAAVAARRGSLFPATASASSLTSAPRRSSIFSVTSEKDMNVLEQTTIADLIRALEVVHTHAVLDEQQQAAAAGGAAGGGGISRGSRKQRKMGNAGLEPPQLPPILSLFAGDQTRTLQAAAANRLYARRSTIVGISPTGGAATAPAARSLLEPPPSYTERAANQSQITAGPSNAPTVQSKFRRRFSVRPTALQIPPGQAPPPGASLMEQSSQTALQRRLSLRPSPLARELSPTSPPGGSGSALPAGAIDESGGTSAQRLLPLPAGTRPSTSSTHSPLSRIVQISQAQRKSSMPSAAATGSSGAPAEK.

The Cytoplasmic segment spans residues Met-1–Trp-6. The helical transmembrane segment at Ile-7–Ile-27 threads the bilayer. Residue Asn-58 is glycosylated (N-linked (GlcNAc...) asparagine). An intramembrane region (pore-forming) is located at residues Ala-95 to Ile-111. Residues Met-120 to Leu-140 form a helical membrane-spanning segment. Residues Gly-141–Gln-170 are Cytoplasmic-facing. A helical membrane pass occupies residues Leu-171 to Leu-191. An intramembrane region (pore-forming) is located at residues Leu-208 to Val-224. The chain crosses the membrane as a helical span at residues Ile-244–Ile-264. The Cytoplasmic portion of the chain corresponds to Thr-265–Lys-1001. A phosphoserine mark is found at Ser-332, Ser-373, Ser-562, and Ser-565. Residues Ser-591 to Met-668 form a disordered region. Residues Ser-685, Ser-691, and Ser-715 each carry the phosphoserine modification. Disordered regions lie at residues Gly-768 to Gln-795 and Ser-830 to Lys-1001. Over residues Thr-832–Ala-841 the composition is skewed to low complexity. Polar residues predominate over residues Ala-855 to Ser-873. Residues Arg-911 to Pro-926 are compositionally biased toward low complexity. A compositionally biased stretch (polar residues) spans Arg-961–Lys-983. The segment covering Ser-984–Lys-1001 has biased composition (low complexity).

It belongs to the two pore domain potassium channel (TC 1.A.1.8) family. Widespread expression in adult, strongest expression in muscle, brain and ovary. Also present at low levels in larva and embryo.

The protein localises to the membrane. Its function is as follows. Background potassium channel. Rectification is dependent on external potassium concentration. Acts as an outwardly rectifying channel but as external potassium levels increase, this is reversed. The chain is Open rectifier potassium channel protein 1 (Ork1) from Drosophila melanogaster (Fruit fly).